The chain runs to 254 residues: Ribosomal RNA small subunit methyltransferase G (254 aa).

The interval 84-109 (NTESKTSLNNAETKNTNEALLTSEPF) is insert. Residues Gly115, Phe120, 171–172 (AE), and Arg185 contribute to the S-adenosyl-L-methionine site.

Belongs to the methyltransferase superfamily. RNA methyltransferase RsmG family.

Its subcellular location is the cytoplasm. Functionally, specifically methylates the N7 position of a guanine in 16S rRNA. This chain is Ribosomal RNA small subunit methyltransferase G, found in Treponema denticola (strain ATCC 35405 / DSM 14222 / CIP 103919 / JCM 8153 / KCTC 15104).